Here is a 200-residue protein sequence, read N- to C-terminus: Large ribosomal subunit protein bL25 (200 aa).

It belongs to the bacterial ribosomal protein bL25 family. CTC subfamily. As to quaternary structure, part of the 50S ribosomal subunit; part of the 5S rRNA/L5/L18/L25 subcomplex. Contacts the 5S rRNA. Binds to the 5S rRNA independently of L5 and L18.

This is one of the proteins that binds to the 5S RNA in the ribosome where it forms part of the central protuberance. This is Large ribosomal subunit protein bL25 from Pseudomonas fluorescens (strain Pf0-1).